Consider the following 157-residue polypeptide: Ribosomal RNA large subunit methyltransferase H (157 aa).

Residues Leu-73, Gly-105, and 124–129 (LSKMTF) contribute to the S-adenosyl-L-methionine site.

It belongs to the RNA methyltransferase RlmH family. As to quaternary structure, homodimer.

Its subcellular location is the cytoplasm. The enzyme catalyses pseudouridine(1915) in 23S rRNA + S-adenosyl-L-methionine = N(3)-methylpseudouridine(1915) in 23S rRNA + S-adenosyl-L-homocysteine + H(+). Its function is as follows. Specifically methylates the pseudouridine at position 1915 (m3Psi1915) in 23S rRNA. The protein is Ribosomal RNA large subunit methyltransferase H of Parabacteroides distasonis (strain ATCC 8503 / DSM 20701 / CIP 104284 / JCM 5825 / NCTC 11152).